The chain runs to 180 residues: Large ribosomal subunit protein uL5c (180 aa).

The protein belongs to the universal ribosomal protein uL5 family. Part of the 50S ribosomal subunit; contacts the 5S rRNA.

The protein localises to the plastid. It is found in the chloroplast. Its function is as follows. Binds 5S rRNA, forms part of the central protuberance of the 50S subunit. This is Large ribosomal subunit protein uL5c (rpl5) from Tetradesmus obliquus (Green alga).